A 1265-amino-acid polypeptide reads, in one-letter code: Dynactin subunit 1 (1265 aa).

A CAP-Gly domain is found at 27–69 (GMTSFAVGKWVGVVLDEPKGKNSGSIKGQQYFQCDENCGMFVR). The segment at 81–179 (GSRRSIEDVS…GNGAASHASS (99 aa)) is disordered. Phosphoserine occurs at positions 85, 110, 114, 117, and 121. Low complexity-rich tracts occupy residues 103-138 (RLSSSRTSLSSSRQSLLGSRTQLTTSLSERTASSSS) and 161-177 (AEGAPAASGGNGAASHA). Ser183 is subject to Phosphoserine. 3 coiled-coil regions span residues 213–570 (NSGA…ESLQ), 812–836 (LIQFLNENMESVRQQVKLIKRRLPS), and 967–1084 (QRAQ…NSTT). A disordered region spans residues 1082 to 1106 (STTGKVQPGSESHSPHNISLSGNTS). Ser1117 is modified (phosphoserine). Positions 1128–1160 (EEVELLKNAFNQERNQRLRLQAQDMRAKLSQFE) form a coiled coil.

Belongs to the dynactin 150 kDa subunit family. As to quaternary structure, monomer and homodimer. Subunit of dynactin, a multiprotein complex part of a tripartite complex with dynein and a adapter, such as BICDL1, BICD2 or HOOK3. The dynactin complex is built around ACTR1A/ACTB filament and consists of an actin-related filament composed of a shoulder domain, a pointed end and a barbed end. Its length is defined by its flexible shoulder domain. The soulder is composed of 2 DCTN1 subunits, 4 DCTN2 and 2 DCTN3. DCTN1/p150(glued) binds directly to microtubules and to cytoplasmic dynein.

The protein localises to the cytoplasm. The protein resides in the cytoskeleton. Its function is as follows. Part of the dynactin complex that activates the molecular motor dynein for ultra-processive transport along microtubules. Plays a key role in dynein-mediated retrograde transport of vesicles and organelles along microtubules by recruiting and tethering dynein to microtubules. Binds to both dynein and microtubules providing a link between specific cargos, microtubules and dynein. Essential for targeting dynein to microtubule plus ends, recruiting dynein to membranous cargos and enhancing dynein processivity (the ability to move along a microtubule for a long distance without falling off the track). Can also act as a brake to slow the dynein motor during motility along the microtubule. Can regulate microtubule stability by promoting microtubule formation, nucleation and polymerization and by inhibiting microtubule catastrophe in neurons. Inhibits microtubule catastrophe by binding both to microtubules and to tubulin, leading to enhanced microtubule stability along the axon. Plays a role in metaphase spindle orientation. Plays a role in centriole cohesion and subdistal appendage organization and function. Its recruitment to the centriole in a KIF3A-dependent manner is essential for the maintenance of centriole cohesion and the formation of subdistal appendage. Also required for microtubule anchoring at the mother centriole. Plays a role in primary cilia formation. The protein is Dynactin subunit 1 of Drosophila melanogaster (Fruit fly).